The primary structure comprises 428 residues: Histidinol dehydrogenase (428 aa).

NAD(+) contacts are provided by tyrosine 125, glutamine 187, and asparagine 210. 3 residues coordinate substrate: serine 234, glutamine 256, and histidine 259. Zn(2+) is bound by residues glutamine 256 and histidine 259. Residues glutamate 323 and histidine 324 each act as proton acceptor in the active site. Residues histidine 324, aspartate 357, glutamate 411, and histidine 416 each coordinate substrate. Aspartate 357 provides a ligand contact to Zn(2+). Residue histidine 416 participates in Zn(2+) binding.

This sequence belongs to the histidinol dehydrogenase family. Zn(2+) is required as a cofactor.

The enzyme catalyses L-histidinol + 2 NAD(+) + H2O = L-histidine + 2 NADH + 3 H(+). Its pathway is amino-acid biosynthesis; L-histidine biosynthesis; L-histidine from 5-phospho-alpha-D-ribose 1-diphosphate: step 9/9. Its function is as follows. Catalyzes the sequential NAD-dependent oxidations of L-histidinol to L-histidinaldehyde and then to L-histidine. The polypeptide is Histidinol dehydrogenase (Bacteroides thetaiotaomicron (strain ATCC 29148 / DSM 2079 / JCM 5827 / CCUG 10774 / NCTC 10582 / VPI-5482 / E50)).